A 142-amino-acid polypeptide reads, in one-letter code: Hemoglobin subunit zeta (142 aa).

At serine 2 the chain carries N-acetylserine. In terms of domain architecture, Globin spans 2–142 (SLTKTERTII…VSSVLTEKYR (141 aa)). Threonine 29 is subject to Phosphothreonine. Serine 53 is subject to Phosphoserine. Histidine 59 is a heme b binding site. Serine 73 and serine 82 each carry phosphoserine. Histidine 88 serves as a coordination point for heme b.

It belongs to the globin family. Heterotetramer of two zeta chains and two epsilon chains in early embryonic hemoglobin Gower-1; two zeta chains and two gamma chains in fetal hemoglobin Portland-1. Heterotetramer of two zeta chains and two beta chains in hemoglobin Portland-2, detected in fetuses and neonates with homozygous alpha-thalassemia. In terms of tissue distribution, detected in fetal erythrocytes (at protein level).

Functionally, the zeta chain is an alpha-type chain of mammalian embryonic hemoglobin. The sequence is that of Hemoglobin subunit zeta (HBZ) from Homo sapiens (Human).